Reading from the N-terminus, the 136-residue chain is Putative pre-16S rRNA nuclease (136 aa).

The protein belongs to the YqgF nuclease family.

The protein resides in the cytoplasm. Could be a nuclease involved in processing of the 5'-end of pre-16S rRNA. This Francisella tularensis subsp. holarctica (strain FTNF002-00 / FTA) protein is Putative pre-16S rRNA nuclease.